A 1643-amino-acid chain; its full sequence is Outer membrane protein B (1643 aa).

Positions 1329–1352 (GTLRYLSNAETSDVAGSATGAVSS) are excised as a propeptide. In terms of domain architecture, Autotransporter spans 1355–1643 (EAEVSYGVWA…QGTLKVRVNF (289 aa)).

Belongs to the rickettsiae OmpA/OmpB family.

It localises to the periplasm. The protein localises to the secreted. Its subcellular location is the cell surface. It is found in the cell outer membrane. In terms of biological role, the 120 kDa surface-exposed protein is a major structural protein which may play a role as a rickettsial virulence factor and/or immunogen during infection. The 32 kDa beta peptide may serve as a membrane anchor. It has been shown to adhere to biotinylated Vero cell proteins. This chain is Outer membrane protein B (ompB), found in Rickettsia prowazekii (strain Madrid E).